Reading from the N-terminus, the 562-residue chain is Membrane protein insertase YidC (562 aa).

A helical transmembrane segment spans residues 4-24; that stretch reads QRIFLFLALSILGLLLWTSWE. Residues 33–71 are disordered; that stretch reads TEEVVEAEDDVPAPAETPDEAPDPADGETPARDRAEVED. Over residues 35-58 the composition is skewed to acidic residues; that stretch reads EVVEAEDDVPAPAETPDEAPDPAD. The span at 61-71 shows a compositional bias: basic and acidic residues; it reads TPARDRAEVED. The next 4 helical transmembrane spans lie at 330-350, 356-376, 426-446, and 499-519; these read MTLSVDYGFLTVLAKPLFWLL, IVGNWGVAIILVTLLIKLAFY, LGGCLPILVQIPVFIALYWVL, and IMMALPIVFTGFFMLFPAGLV.

It belongs to the OXA1/ALB3/YidC family. Type 1 subfamily. Interacts with the Sec translocase complex via SecD. Specifically interacts with transmembrane segments of nascent integral membrane proteins during membrane integration.

Its subcellular location is the cell inner membrane. Its function is as follows. Required for the insertion and/or proper folding and/or complex formation of integral membrane proteins into the membrane. Involved in integration of membrane proteins that insert both dependently and independently of the Sec translocase complex, as well as at least some lipoproteins. Aids folding of multispanning membrane proteins. This is Membrane protein insertase YidC from Alkalilimnicola ehrlichii (strain ATCC BAA-1101 / DSM 17681 / MLHE-1).